We begin with the raw amino-acid sequence, 331 residues long: RNA 3'-terminal phosphate cyclase (331 aa).

ATP is bound by residues Gln-100 and 276–280 (HLADQ). His-301 acts as the Tele-AMP-histidine intermediate in catalysis.

The protein belongs to the RNA 3'-terminal cyclase family. Type 1 subfamily.

The protein resides in the cytoplasm. It catalyses the reaction a 3'-end 3'-phospho-ribonucleotide-RNA + ATP = a 3'-end 2',3'-cyclophospho-ribonucleotide-RNA + AMP + diphosphate. Catalyzes the conversion of 3'-phosphate to a 2',3'-cyclic phosphodiester at the end of RNA. The mechanism of action of the enzyme occurs in 3 steps: (A) adenylation of the enzyme by ATP; (B) transfer of adenylate to an RNA-N3'P to produce RNA-N3'PP5'A; (C) and attack of the adjacent 2'-hydroxyl on the 3'-phosphorus in the diester linkage to produce the cyclic end product. The biological role of this enzyme is unknown but it is likely to function in some aspects of cellular RNA processing. The sequence is that of RNA 3'-terminal phosphate cyclase from Methanosarcina barkeri (strain Fusaro / DSM 804).